Here is a 337-residue protein sequence, read N- to C-terminus: Glyceraldehyde-3-phosphate dehydrogenase (337 aa).

NAD(+) is bound by residues 12 to 13 (RI), aspartate 34, and arginine 79. Residues 150–152 (SCT), threonine 181, 210–211 (TG), and arginine 233 each bind D-glyceraldehyde 3-phosphate. Residue cysteine 151 is the Nucleophile of the active site. Asparagine 315 provides a ligand contact to NAD(+).

The protein belongs to the glyceraldehyde-3-phosphate dehydrogenase family. Homotetramer.

The protein localises to the cytoplasm. It catalyses the reaction D-glyceraldehyde 3-phosphate + phosphate + NAD(+) = (2R)-3-phospho-glyceroyl phosphate + NADH + H(+). It participates in carbohydrate degradation; glycolysis; pyruvate from D-glyceraldehyde 3-phosphate: step 1/5. The sequence is that of Glyceraldehyde-3-phosphate dehydrogenase from Cryphonectria parasitica (Chestnut blight fungus).